Reading from the N-terminus, the 878-residue chain is MutS protein homolog 4 (878 aa).

The segment at 22-41 (NSSNSISKPSTKKSIRNQKS) is disordered. An ATP-binding site is contributed by 634–641 (GCNMSGKS).

This sequence belongs to the DNA mismatch repair MutS family. Heterooligomer of MSH4 and MSH5.

Involved in meiotic recombination. Facilitate crossovers between homologs during meiosis. This is MutS protein homolog 4 (MSH4) from Saccharomyces cerevisiae (strain ATCC 204508 / S288c) (Baker's yeast).